We begin with the raw amino-acid sequence, 82 residues long: Sulfur carrier protein TusA (82 aa).

Catalysis depends on Cys-19, which acts as the Cysteine persulfide intermediate.

It belongs to the sulfur carrier protein TusA family.

It is found in the cytoplasm. Functionally, sulfur carrier protein which probably makes part of a sulfur-relay system. This is Sulfur carrier protein TusA from Vibrio parahaemolyticus serotype O3:K6 (strain RIMD 2210633).